The following is a 222-amino-acid chain: FCS-Like Zinc finger 13 (222 aa).

The FLZ-type zinc-finger motif lies at 149–192 (EFLSSCCLCKKKLQGKDIYMYKGEMGFCSAECRSVQIMNDERQE).

This sequence belongs to the FLZ family. Interacts with KIN10 and KIN11 via its FLZ-type zinc finger domain. Interacts with KINB1, KINB2, KINB3 and SNF4 via its N-terminal part.

The protein localises to the nucleus. It is found in the cytoplasm. In terms of biological role, may act as an adapter to facilitate the interaction of SnRK1 complex with effector proteins, conferring tissue- and stimulus-type specific differences in the SnRK1 regulation pathway. This is FCS-Like Zinc finger 13 from Arabidopsis thaliana (Mouse-ear cress).